The sequence spans 154 residues: Snaclec salmorin subunit A (154 aa).

The N-terminal stretch at methionine 1–alanine 23 is a signal peptide. 3 disulfides stabilise this stretch: cysteine 27–cysteine 38, cysteine 55–cysteine 152, and cysteine 127–cysteine 144. In terms of domain architecture, C-type lectin spans asparagine 34–glutamate 153. Positions 66, 68, and 72 each coordinate Ca(2+). Residue glutamate 153 coordinates Ca(2+).

Belongs to the snaclec family. Heterodimer of subunits A and B; disulfide-linked. In terms of tissue distribution, expressed by the venom gland.

It is found in the secreted. Functionally, inhibits thrombin-induced fibrinogen clotting and factor Xa-induced prothrombin activation. Binds to thrombin and prothrombin exosites. In Gloydius brevicauda (Korean slamosa snake), this protein is Snaclec salmorin subunit A.